Reading from the N-terminus, the 245-residue chain is 1-(5-phosphoribosyl)-5-[(5-phosphoribosylamino)methylideneamino] imidazole-4-carboxamide isomerase (245 aa).

Catalysis depends on Asp-8, which acts as the Proton acceptor. The active-site Proton donor is the Asp-129.

It belongs to the HisA/HisF family.

It is found in the cytoplasm. The enzyme catalyses 1-(5-phospho-beta-D-ribosyl)-5-[(5-phospho-beta-D-ribosylamino)methylideneamino]imidazole-4-carboxamide = 5-[(5-phospho-1-deoxy-D-ribulos-1-ylimino)methylamino]-1-(5-phospho-beta-D-ribosyl)imidazole-4-carboxamide. The protein operates within amino-acid biosynthesis; L-histidine biosynthesis; L-histidine from 5-phospho-alpha-D-ribose 1-diphosphate: step 4/9. The chain is 1-(5-phosphoribosyl)-5-[(5-phosphoribosylamino)methylideneamino] imidazole-4-carboxamide isomerase from Geotalea daltonii (strain DSM 22248 / JCM 15807 / FRC-32) (Geobacter daltonii).